Reading from the N-terminus, the 263-residue chain is Acyl-[acyl-carrier-protein]--UDP-N-acetylglucosamine O-acyltransferase (263 aa).

It belongs to the transferase hexapeptide repeat family. LpxA subfamily. As to quaternary structure, homotrimer.

The protein resides in the cytoplasm. It carries out the reaction a (3R)-hydroxyacyl-[ACP] + UDP-N-acetyl-alpha-D-glucosamine = a UDP-3-O-[(3R)-3-hydroxyacyl]-N-acetyl-alpha-D-glucosamine + holo-[ACP]. Its pathway is glycolipid biosynthesis; lipid IV(A) biosynthesis; lipid IV(A) from (3R)-3-hydroxytetradecanoyl-[acyl-carrier-protein] and UDP-N-acetyl-alpha-D-glucosamine: step 1/6. Its function is as follows. Involved in the biosynthesis of lipid A, a phosphorylated glycolipid that anchors the lipopolysaccharide to the outer membrane of the cell. This is Acyl-[acyl-carrier-protein]--UDP-N-acetylglucosamine O-acyltransferase from Xanthomonas euvesicatoria pv. vesicatoria (strain 85-10) (Xanthomonas campestris pv. vesicatoria).